The primary structure comprises 340 residues: Uroporphyrinogen decarboxylase (340 aa).

Substrate is bound by residues 21-25, aspartate 71, tyrosine 148, serine 203, and histidine 316; that span reads RQAGR.

Belongs to the uroporphyrinogen decarboxylase family. Homodimer.

The protein resides in the cytoplasm. It carries out the reaction uroporphyrinogen III + 4 H(+) = coproporphyrinogen III + 4 CO2. It functions in the pathway porphyrin-containing compound metabolism; protoporphyrin-IX biosynthesis; coproporphyrinogen-III from 5-aminolevulinate: step 4/4. Its function is as follows. Catalyzes the decarboxylation of four acetate groups of uroporphyrinogen-III to yield coproporphyrinogen-III. The sequence is that of Uroporphyrinogen decarboxylase from Campylobacter jejuni subsp. jejuni serotype O:23/36 (strain 81-176).